Reading from the N-terminus, the 275-residue chain is Dermonecrotic toxin SpeSicTox-betaIIA3ii (275 aa).

Histidine 5 is a catalytic residue. Residues glutamate 25 and aspartate 27 each contribute to the Mg(2+) site. Histidine 41 serves as the catalytic Nucleophile. 2 disulfide bridges follow: cysteine 45/cysteine 51 and cysteine 47/cysteine 190. Aspartate 85 serves as a coordination point for Mg(2+).

This sequence belongs to the arthropod phospholipase D family. Class II subfamily. Requires Mg(2+) as cofactor. In terms of tissue distribution, expressed by the venom gland.

It is found in the secreted. It carries out the reaction an N-(acyl)-sphingosylphosphocholine = an N-(acyl)-sphingosyl-1,3-cyclic phosphate + choline. The catalysed reaction is an N-(acyl)-sphingosylphosphoethanolamine = an N-(acyl)-sphingosyl-1,3-cyclic phosphate + ethanolamine. It catalyses the reaction a 1-acyl-sn-glycero-3-phosphocholine = a 1-acyl-sn-glycero-2,3-cyclic phosphate + choline. The enzyme catalyses a 1-acyl-sn-glycero-3-phosphoethanolamine = a 1-acyl-sn-glycero-2,3-cyclic phosphate + ethanolamine. Its function is as follows. Dermonecrotic toxins cleave the phosphodiester linkage between the phosphate and headgroup of certain phospholipids (sphingolipid and lysolipid substrates), forming an alcohol (often choline) and a cyclic phosphate. This toxin acts on sphingomyelin (SM). It may also act on ceramide phosphoethanolamine (CPE), lysophosphatidylcholine (LPC) and lysophosphatidylethanolamine (LPE), but not on lysophosphatidylserine (LPS), and lysophosphatidylglycerol (LPG). It acts by transphosphatidylation, releasing exclusively cyclic phosphate products as second products. Induces dermonecrosis, hemolysis, increased vascular permeability, edema, inflammatory response, and platelet aggregation. This chain is Dermonecrotic toxin SpeSicTox-betaIIA3ii, found in Sicarius peruensis (Six-eyed sand spider).